The following is a 242-amino-acid chain: 1-(5-phosphoribosyl)-5-[(5-phosphoribosylamino)methylideneamino] imidazole-4-carboxamide isomerase (242 aa).

Aspartate 8 acts as the Proton acceptor in catalysis. The active-site Proton donor is the aspartate 129.

Belongs to the HisA/HisF family.

The protein resides in the cytoplasm. It carries out the reaction 1-(5-phospho-beta-D-ribosyl)-5-[(5-phospho-beta-D-ribosylamino)methylideneamino]imidazole-4-carboxamide = 5-[(5-phospho-1-deoxy-D-ribulos-1-ylimino)methylamino]-1-(5-phospho-beta-D-ribosyl)imidazole-4-carboxamide. Its pathway is amino-acid biosynthesis; L-histidine biosynthesis; L-histidine from 5-phospho-alpha-D-ribose 1-diphosphate: step 4/9. The sequence is that of 1-(5-phosphoribosyl)-5-[(5-phosphoribosylamino)methylideneamino] imidazole-4-carboxamide isomerase from Clostridium botulinum (strain Langeland / NCTC 10281 / Type F).